The following is a 140-amino-acid chain: Pro-variola growth factor (140 aa).

The signal sequence occupies residues 1 to 18 (MSMKYLMLLFAAMIIRSF). The Extracellular portion of the chain corresponds to 19–100 (ANSGNAIETT…SEKPNTTTSY (82 aa)). The N-linked (GlcNAc...) asparagine; by host glycan is linked to Asn-34. The 41-residue stretch at 41–81 (AIRLCGPEGNGYCFHGICIHARDIDGMYCRCSHGYTGIRCQ) folds into the EGF-like domain. Cystine bridges form between Cys-45-Cys-58, Cys-53-Cys-69, and Cys-71-Cys-80. An N-linked (GlcNAc...) asparagine; by host glycan is attached at Asn-95. The helical transmembrane segment at 101–121 (IPSPGIVLVLLVSIIMCCLLF) threads the bilayer. The Cytoplasmic portion of the chain corresponds to 122-140 (VYRFTRRTNKLPLQDMVVP).

The protein belongs to the orthopoxvirus OPG019 family. As to quaternary structure, variola growth factor interacts with host EGFR and promotes EGFR dimerization.

The protein resides in the host membrane. Its subcellular location is the secreted. Its function is as follows. Stimulates cellular proliferation (hyperplasia)and mobility around infected cells to promote rapid and efficient spread of infection. This effect is beneficial for virus replication in vivo, because poxviruses replicate possibly better in proliferating cells than in quiescent cells. Acts by binding host EGFR, inducing its dimerization, autophosphorylation and leading to activation of several cellular pathways regulating cell proliferation or cell survival. The activation by host EGFR of mitogen activated protein kinases (MAPK) and extracellular-signal regulated kinases (ERK) are essential for the positive effect of vaccinia growth factor on poxvirus virulence in vivo. The sequence is that of Pro-variola growth factor (OPG019) from Variola virus.